Here is a 331-residue protein sequence, read N- to C-terminus: UPF0324 membrane protein SAR0338 (331 aa).

Transmembrane regions (helical) follow at residues 9–26 (FMIGLSLTFIVALFSFLA), 31–48 (ILDKVGALTIAILIAILY), 69–88 (LLRFAIILYGLKLNIFDIIG), 93–115 (LLAIDVGVVIFSIVMMLFVNKLL), 122–144 (ALLLGVGTGVCGAAAIAAVAPIF), 154–176 (SIGIIALIGTIFSLIYTAIYAIF), 183–202 (YGAWSGVSLHEIAHVVLAGG), 217–234 (LGRVFLLIPLTIVLILIM), 247–269 (ISIPYFLIGFVIMALVNTYVTIP), 273–295 (LNILNTVSTICLLMAMVALGLNV), and 308–330 (LMTIIITSICLSSLAFIVVHWLY).

The protein belongs to the UPF0324 family.

Its subcellular location is the cell membrane. The protein is UPF0324 membrane protein SAR0338 of Staphylococcus aureus (strain MRSA252).